Here is a 183-residue protein sequence, read N- to C-terminus: UPF0397 protein EF_2154 (183 aa).

Transmembrane regions (helical) follow at residues 10–30 (IVAI…VVIP), 44–64 (FLAL…GLIG), 74–94 (GSAW…FGFA), 115–135 (IFQA…LDIL), and 147–167 (QGVF…TLLM).

Belongs to the UPF0397 family.

The protein localises to the cell membrane. This Enterococcus faecalis (strain ATCC 700802 / V583) protein is UPF0397 protein EF_2154.